A 242-amino-acid polypeptide reads, in one-letter code: UDP-2,3-diacylglucosamine hydrolase (242 aa).

The Mn(2+) site is built by Asp-7, His-9, Asp-40, Asn-78, and His-113. 78 to 79 contacts substrate; the sequence is NR. The substrate site is built by Asp-121, Ser-159, Thr-163, Lys-166, and His-194. The Mn(2+) site is built by His-194 and His-196.

The protein belongs to the LpxH family. The cofactor is Mn(2+).

It is found in the cell inner membrane. The catalysed reaction is UDP-2-N,3-O-bis[(3R)-3-hydroxytetradecanoyl]-alpha-D-glucosamine + H2O = 2-N,3-O-bis[(3R)-3-hydroxytetradecanoyl]-alpha-D-glucosaminyl 1-phosphate + UMP + 2 H(+). Its pathway is glycolipid biosynthesis; lipid IV(A) biosynthesis; lipid IV(A) from (3R)-3-hydroxytetradecanoyl-[acyl-carrier-protein] and UDP-N-acetyl-alpha-D-glucosamine: step 4/6. Hydrolyzes the pyrophosphate bond of UDP-2,3-diacylglucosamine to yield 2,3-diacylglucosamine 1-phosphate (lipid X) and UMP by catalyzing the attack of water at the alpha-P atom. Involved in the biosynthesis of lipid A, a phosphorylated glycolipid that anchors the lipopolysaccharide to the outer membrane of the cell. The chain is UDP-2,3-diacylglucosamine hydrolase from Ectopseudomonas mendocina (strain ymp) (Pseudomonas mendocina).